Consider the following 231-residue polypeptide: Large ribosomal subunit protein uL1 (231 aa).

Belongs to the universal ribosomal protein uL1 family. In terms of assembly, part of the 50S ribosomal subunit.

Binds directly to 23S rRNA. The L1 stalk is quite mobile in the ribosome, and is involved in E site tRNA release. Functionally, protein L1 is also a translational repressor protein, it controls the translation of the L11 operon by binding to its mRNA. This Agrobacterium fabrum (strain C58 / ATCC 33970) (Agrobacterium tumefaciens (strain C58)) protein is Large ribosomal subunit protein uL1.